The primary structure comprises 273 residues: 4-diphosphocytidyl-2-C-methyl-D-erythritol kinase (273 aa).

Lys-9 is an active-site residue. 90–100 serves as a coordination point for ATP; the sequence is PVAAGLGGGSA. Residue Asp-129 is part of the active site.

Belongs to the GHMP kinase family. IspE subfamily.

The enzyme catalyses 4-CDP-2-C-methyl-D-erythritol + ATP = 4-CDP-2-C-methyl-D-erythritol 2-phosphate + ADP + H(+). The protein operates within isoprenoid biosynthesis; isopentenyl diphosphate biosynthesis via DXP pathway; isopentenyl diphosphate from 1-deoxy-D-xylulose 5-phosphate: step 3/6. In terms of biological role, catalyzes the phosphorylation of the position 2 hydroxy group of 4-diphosphocytidyl-2C-methyl-D-erythritol. This chain is 4-diphosphocytidyl-2-C-methyl-D-erythritol kinase, found in Erythrobacter litoralis (strain HTCC2594).